The primary structure comprises 615 residues: MSKKFAHTQEELEKLSLKELENLAASMREKIIQVVSKNGGHLSSNLGAVELSIAMHLVFDAKKDPFIFDVSHQSYTHKLLSGKEEIFDTLRQINGLSGYTKPSEGDYFVAGHSSTSISLAVGACKAIALKGEKRIPVALIGDGALSAGMAYEALNELGDSKFPCVILLNDNEMSISKPIGAISKYLSQAMATQFYQSFKKRIAKMLDILPDSATYMAKRFEESFKLITPGLLFEELGLEYIGPIDGHNLGEIISALKQAKAMQKPCVIHAQTIKGKGYALAEGKHAKWHGVGAFDIDSGESVKKSDTKKSATEIFSKNLLDLASKYENIVGVTAAMPSGTGLDKLIEKYPNRFWDVAIAEQHAVTSMAAMAKEGFKPFIAIYSTFLQRAYDQVIHDCAIMNLNVVFAMDRAGIVGEDGETHQGVFDLSFLAPLPNFTLLAPRDEQMMQNIMEYAYLHQGPIALRYPRGSFILDKEFNPCEIKLGKAQWLVKNNSEIAFLGYGQGVAKAWQVLRALQEMNNNANLIDLIFAKPLDEELLCELAKKSKIWFIFSENVKIGGIESLINNFLQKYDLHVKVVSFEYEDKFIEHGKTSEVEKNLEKDVNSLLTKVLKFYH.

Thiamine diphosphate is bound by residues His72 and 111–113 (GHS). Position 142 (Asp142) interacts with Mg(2+). Residues 143-144 (GA), Asn171, Tyr278, and Glu360 contribute to the thiamine diphosphate site. Asn171 lines the Mg(2+) pocket.

The protein belongs to the transketolase family. DXPS subfamily. In terms of assembly, homodimer. Mg(2+) is required as a cofactor. It depends on thiamine diphosphate as a cofactor.

The enzyme catalyses D-glyceraldehyde 3-phosphate + pyruvate + H(+) = 1-deoxy-D-xylulose 5-phosphate + CO2. It functions in the pathway metabolic intermediate biosynthesis; 1-deoxy-D-xylulose 5-phosphate biosynthesis; 1-deoxy-D-xylulose 5-phosphate from D-glyceraldehyde 3-phosphate and pyruvate: step 1/1. Its function is as follows. Catalyzes the acyloin condensation reaction between C atoms 2 and 3 of pyruvate and glyceraldehyde 3-phosphate to yield 1-deoxy-D-xylulose-5-phosphate (DXP). The sequence is that of 1-deoxy-D-xylulose-5-phosphate synthase from Campylobacter jejuni subsp. jejuni serotype O:2 (strain ATCC 700819 / NCTC 11168).